Here is a 596-residue protein sequence, read N- to C-terminus: Protein kinase C iota type (596 aa).

Residues 1 to 12 (MPTQRDSSTMSH) show a composition bias toward polar residues. Residues 1-23 (MPTQRDSSTMSHTVAGGGSGDHS) are disordered. P2 carries the N-acetylproline modification. The required for interaction with RAB2 stretch occupies residues 2–28 (PTQRDSSTMSHTVAGGGSGDHSHQVRV). A regulatory domain region spans residues 2-253 (PTQRDSSTMS…KASSSLGLQD (252 aa)). The residue at position 3 (T3) is a Phosphothreonine. Residues S7 and S8 each carry the phosphoserine modification. Residue T9 is modified to Phosphothreonine. Residues 25–108 (QVRVKAYYRG…SELLIHVFPC (84 aa)) form the PB1 domain. The interaction with PARD6A stretch occupies residues 72–91 (DEEGDPCTVSSQLELEEAFR). A Pseudosubstrate motif is present at residues 125 to 134 (YRRGARRWRK). Residues 140–190 (GHTFQAKRFNRRAHCAICTDRIWGLGRQGYKCINCKLLVHKKCHKLVTIEC) form a Phorbol-ester/DAG-type zinc finger. Residues 221 to 246 (PSSHESLDQVGEEKEAMNTRESGKAS) form a disordered region. Positions 225–243 (ESLDQVGEEKEAMNTRESG) are enriched in basic and acidic residues. The Protein kinase domain maps to 254–522 (FDLLRVIGRG…FADIQGHPFF (269 aa)). ATP is bound at residue 260–268 (IGRGSYAKV). Residues Y265 and Y280 each carry the phosphotyrosine; by SRC modification. K283 lines the ATP pocket. At Y334 the chain carries Phosphotyrosine; by SRC. The Proton acceptor role is filled by D378. The residue at position 412 (T412) is a Phosphothreonine; by PDPK1. The 72-residue stretch at 523–594 (RNVDWDMMEQ…INPLLMSAEE (72 aa)) folds into the AGC-kinase C-terminal domain. T564 carries the phosphothreonine modification.

This sequence belongs to the protein kinase superfamily. AGC Ser/Thr protein kinase family. PKC subfamily. Forms a complex with SQSTM1 and MP2K5. Interacts directly with SQSTM1. Interacts with IKBKB. Interacts with PARD6A, PARD6B and PARD6G. Part of a quaternary complex containing aPKC, PARD3, a PARD6 protein (PARD6A, PARD6B or PARD6G) and a GTPase protein (CDC42 or RAC1). Part of a complex with LLGL1 and PARD6B. Interacts with ADAP1/CENTA1. Interaction with SMG1, through the ZN-finger domain, activates the kinase activity. Interacts with CDK7. Forms a complex with RAB2A and GAPDH involved in recruitment onto the membrane of vesicular tubular clusters (VTCs). Interacts with ECT2 ('Thr-359' phosphorylated form). Interacts with VAMP2. Interacts with WDFY2 (via WD repeats 1-3). Post-translationally, phosphorylation at Thr-412 in the activation loop is not mandatory for activation. Upon neuronal growth factor (NGF) stimulation, phosphorylated by SRC at Tyr-265, Tyr-280 and Tyr-334. Phosphorylation at Tyr-265 facilitates binding to KPNB1/importin-beta regulating entry of PRKCI into the nucleus. Phosphorylation on Tyr-334 is important for NF-kappa-B stimulation. Phosphorylated at Thr-564 during the initial phase of long term potentiation.

The protein localises to the cytoplasm. Its subcellular location is the membrane. The protein resides in the endosome. It localises to the nucleus. It carries out the reaction L-seryl-[protein] + ATP = O-phospho-L-seryl-[protein] + ADP + H(+). The catalysed reaction is L-threonyl-[protein] + ATP = O-phospho-L-threonyl-[protein] + ADP + H(+). Its activity is regulated as follows. Atypical PKCs (PRKCI and PRKCZ) exhibit an elevated basal enzymatic activity (that may be due to the interaction with SMG1 or SQSTM1) and are not regulated by diacylglycerol, phosphatidylserine, phorbol esters or calcium ions. Two specific sites, Thr-412 (activation loop of the kinase domain) and Thr-564 (turn motif), need to be phosphorylated for its full activation. Might also be a target for novel lipid activators that are elevated during nutrient-stimulated insulin secretion. Functionally, calcium- and diacylglycerol-independent serine/ threonine-protein kinase that plays a general protective role against apoptotic stimuli, is involved in NF-kappa-B activation, cell survival, differentiation and polarity, and contributes to the regulation of microtubule dynamics in the early secretory pathway. Is necessary for BCR-ABL oncogene-mediated resistance to apoptotic drug in leukemia cells, protecting leukemia cells against drug-induced apoptosis. In cultured neurons, prevents amyloid beta protein-induced apoptosis by interrupting cell death process at a very early step. In glioblastoma cells, may function downstream of phosphatidylinositol 3-kinase (PI(3)K) and PDPK1 in the promotion of cell survival by phosphorylating and inhibiting the pro-apoptotic factor BAD. Can form a protein complex in non-small cell lung cancer (NSCLC) cells with PARD6A and ECT2 and regulate ECT2 oncogenic activity by phosphorylation, which in turn promotes transformed growth and invasion. In response to nerve growth factor (NGF), acts downstream of SRC to phosphorylate and activate IRAK1, allowing the subsequent activation of NF-kappa-B and neuronal cell survival. Functions in the organization of the apical domain in epithelial cells by phosphorylating EZR. This step is crucial for activation and normal distribution of EZR at the early stages of intestinal epithelial cell differentiation. Forms a protein complex with LLGL1 and PARD6B independently of PARD3 to regulate epithelial cell polarity. Plays a role in microtubule dynamics in the early secretory pathway through interaction with RAB2A and GAPDH and recruitment to vesicular tubular clusters (VTCs). In human coronary artery endothelial cells (HCAEC), is activated by saturated fatty acids and mediates lipid-induced apoptosis. Involved in early synaptic long term potentiation phase in CA1 hippocampal cells and short term memory formation. The protein is Protein kinase C iota type (PRKCI) of Pongo abelii (Sumatran orangutan).